The chain runs to 1179 residues: ATP-dependent helicase/deoxyribonuclease subunit B (1179 aa).

The protein belongs to the helicase family. AddB/RexB type 2 subfamily. As to quaternary structure, heterodimer of AddA and RexB. Requires Mg(2+) as cofactor.

Functionally, the heterodimer acts as both an ATP-dependent DNA helicase and an ATP-dependent, dual-direction single-stranded exonuclease. Recognizes the chi site generating a DNA molecule suitable for the initiation of homologous recombination. This subunit has 5' -&gt; 3' nuclease activity but not helicase activity. This Lactobacillus delbrueckii subsp. bulgaricus (strain ATCC 11842 / DSM 20081 / BCRC 10696 / JCM 1002 / NBRC 13953 / NCIMB 11778 / NCTC 12712 / WDCM 00102 / Lb 14) protein is ATP-dependent helicase/deoxyribonuclease subunit B.